Consider the following 264-residue polypeptide: Thymidylate synthase (264 aa).

R21 contacts dUMP. Residue H51 participates in (6R)-5,10-methylene-5,6,7,8-tetrahydrofolate binding. Residue 126 to 127 (RR) participates in dUMP binding. The active-site Nucleophile is the C146. Residues 166–169 (RSAD), N177, and 207–209 (HLY) contribute to the dUMP site. D169 contributes to the (6R)-5,10-methylene-5,6,7,8-tetrahydrofolate binding site. (6R)-5,10-methylene-5,6,7,8-tetrahydrofolate is bound at residue S263.

Belongs to the thymidylate synthase family. Bacterial-type ThyA subfamily. In terms of assembly, homodimer.

The protein resides in the cytoplasm. It carries out the reaction dUMP + (6R)-5,10-methylene-5,6,7,8-tetrahydrofolate = 7,8-dihydrofolate + dTMP. The protein operates within pyrimidine metabolism; dTTP biosynthesis. Its function is as follows. Catalyzes the reductive methylation of 2'-deoxyuridine-5'-monophosphate (dUMP) to 2'-deoxythymidine-5'-monophosphate (dTMP) while utilizing 5,10-methylenetetrahydrofolate (mTHF) as the methyl donor and reductant in the reaction, yielding dihydrofolate (DHF) as a by-product. This enzymatic reaction provides an intracellular de novo source of dTMP, an essential precursor for DNA biosynthesis. This chain is Thymidylate synthase, found in Neisseria meningitidis serogroup B (strain ATCC BAA-335 / MC58).